We begin with the raw amino-acid sequence, 277 residues long: DNA polymerase epsilon subunit C (277 aa).

2 stretches are compositionally biased toward polar residues: residues 1–16 (MSSP…SQVA) and 24–39 (ETPS…TNTP). The tract at residues 1–91 (MSSPMPQSSL…EEEEEEESLS (91 aa)) is disordered. Acidic residues predominate over residues 69-89 (ENEDDDEQEEEEEEEEEEEES).

In terms of assembly, heterotetramer. Consists of four subunits: POL2, DPB2, DPB3 and DPB4.

It localises to the nucleus. In terms of biological role, as accessory component of the DNA polymerase epsilon (DNA polymerase II) participates in chromosomal DNA replication. This is DNA polymerase epsilon subunit C (DPB3) from Debaryomyces hansenii (strain ATCC 36239 / CBS 767 / BCRC 21394 / JCM 1990 / NBRC 0083 / IGC 2968) (Yeast).